A 452-amino-acid chain; its full sequence is MNRQLVNILTALFAFFLETNHFRTAFCKDHDSRSGKQPSQTLSPSDFLDKLMGRTSGYDARIRPNFKGPPVNVTCNIFINSFGSVTETTMDYRVNIFLRQQWNDSRLAYSEYPDDSLDLDPSMLDSIWKPDLFFANEKGANFHDVTTDNKLLRISKNGKVLYSIRLTLTLSCPMDLKNFPMDVQTCTMQLESFGYTMNDLIFEWLSDGPVQVAEGLTLPQFILKEEKELGYCTKHYNTGKFTCIEVKFHLERQMGYYLIQMYIPSLLIVILSWVSFWINMDAAPARVALGITTVLTMTTQSSGSRASLPKVSYVKAIDIWMAVCLLFVFAALLEYAAVNFVSRQHKEFLRLRRRQKRQNKEEDVTRESRFNFSGYGMGHCLQVKDGTAVKATPANPLPQPPKDGDAIKKKFVDRAKRIDTISRAAFPLAFLIFNIFYWITYKIIRHEDVHKK.

Residues 1–27 form the signal peptide; that stretch reads MNRQLVNILTALFAFFLETNHFRTAFC. Over 28 to 256 the chain is Extracellular; sequence KDHDSRSGKQ…KFHLERQMGY (229 aa). Residue Asn72 is glycosylated (N-linked (GlcNAc...) asparagine). Position 99 (Arg99) interacts with glycine. Residue Arg99 coordinates strychnine. The N-linked (GlcNAc...) asparagine glycan is linked to Asn103. Residue Ser163 coordinates glycine. An intrachain disulfide couples Cys172 to Cys186. Residues Glu226 and Glu228 each contribute to the Zn(2+) site. A disulfide bond links Cys232 and Cys243. Thr238 serves as a coordination point for glycine. His249 serves as a coordination point for Zn(2+). Residues 257–278 traverse the membrane as a helical segment; that stretch reads YLIQMYIPSLLIVILSWVSFWI. Topologically, residues 279 to 283 are cytoplasmic; it reads NMDAA. A helical transmembrane segment spans residues 284 to 304; sequence PARVALGITTVLTMTTQSSGS. Topologically, residues 305–315 are extracellular; the sequence is RASLPKVSYVK. Residues 316 to 336 traverse the membrane as a helical segment; it reads AIDIWMAVCLLFVFAALLEYA. The Cytoplasmic portion of the chain corresponds to 337 to 420; sequence AVNFVSRQHK…FVDRAKRIDT (84 aa). A helical membrane pass occupies residues 421–441; the sequence is ISRAAFPLAFLIFNIFYWITY. Over 442-452 the chain is Extracellular; it reads KIIRHEDVHKK.

It belongs to the ligand-gated ion channel (TC 1.A.9) family. Glycine receptor (TC 1.A.9.3) subfamily. GLRA2 sub-subfamily. In terms of assembly, interacts with GLRB. Heteropentamer composed of GLRA2 and GLRB. Functional GLRB-GLRA2 heteropentamers contain four GLRA2 subunits and one GLRB subunit, although alternative subunit composition cannot be excluded. Homopentamer (in vitro). Both homopentamers and heteropentamers form functional ion channels, but their characteristics are subtly different.

The protein localises to the postsynaptic cell membrane. The protein resides in the synapse. It is found in the cell membrane. It localises to the cell projection. It carries out the reaction chloride(in) = chloride(out). Its activity is regulated as follows. Channel opening is triggered by extracellular glycine. Channel opening is also triggered by taurine and beta-alanine. Inhibited by strychnine. Inhibited by picrotoxin. Channel activity is potentiated by 10-100 uM Zn(2+). Channel activity is marginally increased by 50 mM ethanol; it is strongly increased by a combination of 0.5 uM Zn(2+) and 50 mM ethanol. Channel activity is inhibited by 100-1000 uM Zn(2+). In terms of biological role, subunit of heteromeric glycine-gated chloride channels. Plays a role in synaptic plasticity. Contributes to the generation of inhibitory postsynaptic currents, and is involved in the down-regulation of neuronal excitability. Plays a role in cellular responses to ethanol. This is Glycine receptor subunit alpha-2 from Homo sapiens (Human).